We begin with the raw amino-acid sequence, 577 residues long: Anthranilate synthase alpha subunit 1, chloroplastic (577 aa).

Residues 1-34 constitute a chloroplast transit peptide; sequence MASLVLSLRIAPSTPPLGLGGGRFRGRRGAVACR.

Belongs to the anthranilate synthase component I family. As to quaternary structure, heterotetramer consisting of two non-identical subunits: a beta subunit and a large alpha subunit.

The protein resides in the plastid. Its subcellular location is the chloroplast. It carries out the reaction chorismate + L-glutamine = anthranilate + pyruvate + L-glutamate + H(+). It participates in amino-acid biosynthesis; L-tryptophan biosynthesis; L-tryptophan from chorismate: step 1/5. Its activity is regulated as follows. Feedback inhibition by tryptophan. Functionally, part of a heterotetrameric complex that catalyzes the two-step biosynthesis of anthranilate, an intermediate in the biosynthesis of L-tryptophan. In the first step, the glutamine-binding beta subunit of anthranilate synthase (AS) provides the glutamine amidotransferase activity which generates ammonia as a substrate that, along with chorismate, is used in the second step, catalyzed by the large alpha subunit of AS to produce anthranilate. This is Anthranilate synthase alpha subunit 1, chloroplastic from Oryza sativa subsp. japonica (Rice).